The primary structure comprises 610 residues: Sterol O-acyltransferase 1 (610 aa).

Residues S21 and S45 each carry the phosphoserine modification. The interval S41–Y81 is disordered. The segment covering E67–E76 has biased composition (basic and acidic residues). A run of 5 helical transmembrane segments spans residues L182 to I202, L229 to V249, G264 to V284, I371 to Y391, and I409 to M429. The short motif at F491–N497 is the FYXDWWN motif element. 2 helical membrane passes run A535–F555 and V590–L610. H547 is an active-site residue.

It belongs to the membrane-bound acyltransferase family. Sterol o-acyltransferase subfamily.

Its subcellular location is the endoplasmic reticulum membrane. It catalyses the reaction lanosterol + an acyl-CoA = lanosteryl ester + CoA. Its function is as follows. Sterol O-acyltransferase that catalyzes the formation of stery esters. The chain is Sterol O-acyltransferase 1 from Saccharomyces cerevisiae (strain ATCC 204508 / S288c) (Baker's yeast).